The following is a 240-amino-acid chain: uncharacterized protein (240 aa).

This is an uncharacterized protein from Acidianus two-tailed virus (ATV).